The sequence spans 147 residues: uncharacterized protein (147 aa).

Residues Met1–Lys137 form the HTH marR-type domain. Residues Gln53–Lys76 constitute a DNA-binding region (H-T-H motif).

This is an uncharacterized protein from Bacillus cereus (strain ATCC 14579 / DSM 31 / CCUG 7414 / JCM 2152 / NBRC 15305 / NCIMB 9373 / NCTC 2599 / NRRL B-3711).